Consider the following 100-residue polypeptide: Conantokin-G (100 aa).

Positions 1 to 21 (MHLYTYLYLLVPLVTFHLILG) are cleaved as a signal peptide. Positions 22 to 80 (TGTLDDGGALTERRSADATALKAEPVLLQKSAARSTDDNGKDRLTQMKRILKQRGNKAR) are excised as a propeptide. Positions 52-100 (SAARSTDDNGKDRLTQMKRILKQRGNKARGEEELQENQELIREKSNGKR) are disordered. Residues 56-66 (STDDNGKDRLT) show a composition bias toward basic and acidic residues. The gamma-carboxylation recognition sequence that plays a role in the conversion of Glu to carboxy-Glu (Gla) stretch occupies residues 61 to 80 (GKDRLTQMKRILKQRGNKAR). Glutamate 83 is an a divalent metal cation binding site. 4-carboxyglutamate is present on residues glutamate 83, glutamate 84, glutamate 87, glutamate 90, and glutamate 94. A divalent metal cation is bound by residues glutamate 87, glutamate 90, and glutamate 94. Over residues 90 to 100 (ELIREKSNGKR) the composition is skewed to basic and acidic residues. Asparagine 97 is subject to Asparagine amide.

Belongs to the conotoxin B superfamily. Ca(2+) is required as a cofactor. It depends on Mg(2+) as a cofactor. Expressed by the venom duct.

Its subcellular location is the secreted. Functionally, conantokins inhibit N-methyl-D-aspartate (NMDA) receptors. This toxin is selective for the NR2B/GRIN2B subunit. Induces sleep-like symptoms in young mice and hyperactivity in older mice. The sequence is that of Conantokin-G from Conus geographus (Geography cone).